The primary structure comprises 111 residues: Large ribosomal subunit protein uL22 (111 aa).

This sequence belongs to the universal ribosomal protein uL22 family. As to quaternary structure, part of the 50S ribosomal subunit.

Functionally, this protein binds specifically to 23S rRNA; its binding is stimulated by other ribosomal proteins, e.g. L4, L17, and L20. It is important during the early stages of 50S assembly. It makes multiple contacts with different domains of the 23S rRNA in the assembled 50S subunit and ribosome. The globular domain of the protein is located near the polypeptide exit tunnel on the outside of the subunit, while an extended beta-hairpin is found that lines the wall of the exit tunnel in the center of the 70S ribosome. This is Large ribosomal subunit protein uL22 from Xylella fastidiosa (strain M23).